A 211-amino-acid polypeptide reads, in one-letter code: Formate dehydrogenase, cytochrome b556(fdo) subunit (211 aa).

The Cytoplasmic portion of the chain corresponds to 1-17 (MKRRDTIVRYTAPERIN). H18 is a heme b binding site. Residues 18 to 32 (HWITAFCFILAAVSG) traverse the membrane as a helical segment. The Periplasmic segment spans residues 33-53 (LGFLFPSFNWLMQIMGTPQLA). Residues 54–72 (RILHPFVGVVMFASFIIMF) traverse the membrane as a helical segment. H57 lines the heme b pocket. Over 73–112 (FRYWHHNLINRDDIFWAKNIRKIVVNEEVGDTGRYNFGQK) the chain is Cytoplasmic. The helical transmembrane segment at 113 to 130 (CVFWAAIIFLVLLLVSGV) threads the bilayer. Residues 131 to 151 (IIWRPYFAPAFSIPVIRFALM) lie on the Periplasmic side of the membrane. Residues 152 to 170 (LHSFAAVALIVVIMVHIYA) traverse the membrane as a helical segment. Heme b-binding residues include H153 and H167. Over 171–211 (ALWVKGTITAMVEGWVTSAWAKKHHPRWYREVRKTTEKKAE) the chain is Cytoplasmic.

It belongs to the formate dehydrogenase gamma subunit family. As to quaternary structure, formate dehydrogenase is a membrane-bound complex, formed by subunits alpha, beta and gamma. It depends on heme as a cofactor.

The protein localises to the cell inner membrane. Allows to use formate as major electron donor during aerobic respiration. Subunit gamma is probably the cytochrome b556(FDO) component of the formate dehydrogenase. This is Formate dehydrogenase, cytochrome b556(fdo) subunit (fdoI) from Escherichia coli O157:H7.